The following is a 188-amino-acid chain: Probable manganese efflux pump MntP (188 aa).

Transmembrane regions (helical) follow at residues 3–23 (ITATVLLAFGMSMDAFAASIG), 66–86 (LEWNHWIAFVLLIFLGGRMII), 106–128 (WLLVTTAIATSLDAMAVGVGLAF), 143–163 (ATLIMSTLGMMVGRFIGSIIG), and 168–188 (ILGGLVLIGIGVQILWTHFHG).

The protein belongs to the MntP (TC 9.B.29) family.

It is found in the cell inner membrane. Functionally, probably functions as a manganese efflux pump. This chain is Probable manganese efflux pump MntP, found in Escherichia coli O7:K1 (strain IAI39 / ExPEC).